Here is a 337-residue protein sequence, read N- to C-terminus: Glyceraldehyde-3-phosphate dehydrogenase (337 aa).

Residues 11 to 12, D33, and K78 each bind NAD(+); that span reads RI. Residues 149–151, T180, 209–210, and R232 each bind D-glyceraldehyde 3-phosphate; these read SCT and TG. The active-site Nucleophile is C150. N314 contributes to the NAD(+) binding site.

The protein belongs to the glyceraldehyde-3-phosphate dehydrogenase family. Homotetramer.

It is found in the cytoplasm. The catalysed reaction is D-glyceraldehyde 3-phosphate + phosphate + NAD(+) = (2R)-3-phospho-glyceroyl phosphate + NADH + H(+). It functions in the pathway carbohydrate degradation; glycolysis; pyruvate from D-glyceraldehyde 3-phosphate: step 1/5. In Lyophyllum shimeji (Hon-shimeji), this protein is Glyceraldehyde-3-phosphate dehydrogenase (GPD).